The sequence spans 812 residues: Toll-like receptor 10 (812 aa).

The first 19 residues, 1–19 (MRYIRSIYIFCSIVTSVRS), serve as a signal peptide directing secretion. Over 20-577 (GASELPEERE…VHLPEISCNT (558 aa)) the chain is Extracellular. LRR repeat units follow at residues 24 to 46 (LPEERELTTNFSSMSLTKVPEGL), 49 to 70 (ITTTLDLSYNLLFQLQHSDFRS), 73 to 94 (KLKVLILCHNRIQELDIKTFEF), 97 to 118 (ELSYLDVSNNRLKSVTWFSLAG), and 119 to 139 (LRHLDLSFNDFDTLPISVETG). N-linked (GlcNAc...) asparagine glycosylation is present at Asn33. The N-linked (GlcNAc...) asparagine glycan is linked to Asn140. One copy of the LRR 6 repeat lies at 143 to 166 (HLETLGLSGAKIQKSDFQKIAHLQ). A glycan (N-linked (GlcNAc...) asparagine) is linked at Asn189. LRR repeat units lie at residues 296 to 321 (SNTVMRTIKLEHVHFRIFNIPQESIY), 325 to 348 (TKMDIENLTISDAQMPHMLFPMYP), 350 to 373 (RFQYLNFANNILTDDVFKKSIQLP), and 374 to 395 (HLKTLILKDNKLETLSLVSHFA). Asn331 carries an N-linked (GlcNAc...) asparagine glycan. Residue Asn397 is glycosylated (N-linked (GlcNAc...) asparagine). 5 LRR repeats span residues 399 to 420 (SLRHLDLSENLLQHENDENCLW), 423 to 443 (TLVTMNLSFNKFADSVFGCLP), 445 to 467 (NIQILDLNSNKIQTVPKAITHLT), 468 to 489 (SLRELNLAFNFLTDLPGCSHFR), and 490 to 510 (RLLVLNVEMNLILSSSLDFFQ). Asn428 is a glycosylation site (N-linked (GlcNAc...) asparagine). The LRRCT domain occupies 523–577 (NPFRCTCELRDFIQLGKYSEGMMVGWSDSYICEYPLNLKGTQLKDVHLPEISCNT). Residues 578 to 598 (GLLIVTIVVVMLVLGMAVAFC) traverse the membrane as a helical segment. Topologically, residues 599 to 812 (CLHFDLPWYL…AISLIRTDCL (214 aa)) are cytoplasmic. Residues 633–776 (VQFHVFISYS…LFWANLRAAL (144 aa)) enclose the TIR domain.

This sequence belongs to the Toll-like receptor family. As to quaternary structure, binds MYD88 via their respective TIR domains.

It is found in the membrane. Functionally, participates in the innate immune response to microbial agents. Acts via MYD88 and TRAF6, leading to NF-kappa-B activation, cytokine secretion and the inflammatory response. The polypeptide is Toll-like receptor 10 (TLR10) (Bos taurus (Bovine)).